The primary structure comprises 174 residues: MAPPPPSPPPVSLKVSLLLLRVLTGVFLVIALIILSTNSVTIVSQGSALKFHFKDVYAYRYMLSAAVIGLLYAVIQLFFTISEFATGMKNPFNYQLDFYGDKLISYLVATGSAAGFGVSKDLKDAFIALVALDSTDPVDKFFSRGYASASLLLFSFICLAVLSVFSSLAIAKRN.

Over 1-14 the chain is Cytoplasmic; that stretch reads MAPPPPSPPPVSLK. The chain crosses the membrane as a helical span at residues 15–35; sequence VSLLLLRVLTGVFLVIALIIL. Over 36 to 60 the chain is Extracellular; it reads STNSVTIVSQGSALKFHFKDVYAYR. The helical transmembrane segment at 61 to 81 threads the bilayer; sequence YMLSAAVIGLLYAVIQLFFTI. The Cytoplasmic portion of the chain corresponds to 82–150; sequence SEFATGMKNP…FFSRGYASAS (69 aa). The chain crosses the membrane as a helical span at residues 151–171; it reads LLLFSFICLAVLSVFSSLAIA. Residues 172–174 are Extracellular-facing; the sequence is KRN.

Belongs to the Casparian strip membrane proteins (CASP) family. Homodimer and heterodimers.

It is found in the cell membrane. The chain is CASP-like protein 4D2 from Arabidopsis lyrata subsp. lyrata (Lyre-leaved rock-cress).